The following is a 219-amino-acid chain: Protein-L-isoaspartate O-methyltransferase (219 aa).

Ser-60 is an active-site residue.

This sequence belongs to the methyltransferase superfamily. L-isoaspartyl/D-aspartyl protein methyltransferase family.

It localises to the cytoplasm. It catalyses the reaction [protein]-L-isoaspartate + S-adenosyl-L-methionine = [protein]-L-isoaspartate alpha-methyl ester + S-adenosyl-L-homocysteine. Functionally, catalyzes the methyl esterification of L-isoaspartyl residues in peptides and proteins that result from spontaneous decomposition of normal L-aspartyl and L-asparaginyl residues. It plays a role in the repair and/or degradation of damaged proteins. This chain is Protein-L-isoaspartate O-methyltransferase, found in Rhodospirillum rubrum (strain ATCC 11170 / ATH 1.1.1 / DSM 467 / LMG 4362 / NCIMB 8255 / S1).